The chain runs to 493 residues: Alpha-amylase-related protein (493 aa).

A signal peptide spans 1–19 (MFKFALTLTLCLAGSLSLA). Gln20 is subject to Pyrrolidone carboxylic acid. Cys47 and Cys103 are oxidised to a cystine. Asn117, Gln168, and Asp177 together coordinate Ca(2+). Cys156 and Cys170 are oxidised to a cystine. Position 205 (Arg205) interacts with chloride. The active-site Nucleophile is the Asp207. His211 is a binding site for Ca(2+). Glu244 serves as the catalytic Proton donor. Asn307 and Arg342 together coordinate chloride. 3 disulfides stabilise this stretch: Cys375/Cys381, Cys417/Cys440, and Cys447/Cys459.

This sequence belongs to the glycosyl hydrolase 13 family. As to quaternary structure, monomer. It depends on Ca(2+) as a cofactor. Chloride serves as cofactor.

Its subcellular location is the secreted. The catalysed reaction is Endohydrolysis of (1-&gt;4)-alpha-D-glucosidic linkages in polysaccharides containing three or more (1-&gt;4)-alpha-linked D-glucose units.. This is Alpha-amylase-related protein (Amyrel) from Drosophila simulans (Fruit fly).